Reading from the N-terminus, the 608-residue chain is UvrABC system protein C (608 aa).

Residues 22–100 (EKPGIYQYLN…IKKYKPRYNV (79 aa)) enclose the GIY-YIG domain. Residues 214–249 (QEISRLLYQRMQDLAAEMKFEEAQKVKEKYALIENY) enclose the UVR domain.

This sequence belongs to the UvrC family. In terms of assembly, interacts with UvrB in an incision complex.

Its subcellular location is the cytoplasm. The UvrABC repair system catalyzes the recognition and processing of DNA lesions. UvrC both incises the 5' and 3' sides of the lesion. The N-terminal half is responsible for the 3' incision and the C-terminal half is responsible for the 5' incision. The chain is UvrABC system protein C from Bacteroides fragilis (strain ATCC 25285 / DSM 2151 / CCUG 4856 / JCM 11019 / LMG 10263 / NCTC 9343 / Onslow / VPI 2553 / EN-2).